The sequence spans 126 residues: Scygonadin (126 aa).

The signal sequence occupies residues 1 to 24 (MRSSLLLGLTVVVLLGVIVPPCMA).

Expressed in the ejaculatory ducts of mature males. Not detected in the ejaculatory ducts of immature males. Not detected in hepatopancreas, female reproductive tract, eyes, exoskeleton, subcuticular epithelia, heart, gills, stomach, muscle and hemocytes.

Its subcellular location is the secreted. Functionally, has antibacterial activity against the Gram-positive bacterium M.luteus with an IC(90) of 125ug/ml. Has weak antibacterial activity against the Gram-negative bacterium A.hydrophila. The protein is Scygonadin of Scylla serrata (Mud crab).